The sequence spans 493 residues: Probable GTP-binding protein OBGM, mitochondrial (493 aa).

A mitochondrion-targeting transit peptide spans 1–28 (MWLIRAIVPVRYLGSYKRPQKPPWMRNP). The Obg domain occupies 48–303 (TRMRDRFTLY…AVLILELKSI (256 aa)). Disordered regions lie at residues 65 to 89 (SGCSSVRRSRADRYGKPDGGNGGRG) and 146 to 215 (GEIP…EDDD). Residues 187-196 (SESDQDDTEQ) show a composition bias toward acidic residues. Positions 304-476 (ADVGLVGMPN…LKDGLKMLVD (173 aa)) constitute an OBG-type G domain. GTP-binding positions include 310 to 317 (GMPNAGKS) and 356 to 360 (DIPGL).

This sequence belongs to the TRAFAC class OBG-HflX-like GTPase superfamily. OBG GTPase family.

The protein resides in the mitochondrion. Its function is as follows. May bind GTP and have GTPase activity. This chain is Probable GTP-binding protein OBGM, mitochondrial (ATOBGM), found in Arabidopsis thaliana (Mouse-ear cress).